The chain runs to 238 residues: Neuromodulin (238 aa).

Residues 1–238 are disordered; it reads MLCCMRRTKQ…EEPEADQEHA (238 aa). 2 S-palmitoyl cysteine lipidation sites follow: cysteine 3 and cysteine 4. A compositionally biased stretch (basic and acidic residues) spans 9-32; that stretch reads KQVEKNDDDQKIEQDGIKPEDKAH. In terms of domain architecture, IQ spans 31–60; the sequence is AHKAATKIQASFRGHITRKKLKGEKKDDVQ. Residue serine 41 is modified to Phosphoserine; by PHK and PKC. Positions 54–83 are enriched in basic and acidic residues; it reads EKKDDVQAAEAEANKKDEAPVADGVEKKGE. A compositionally biased stretch (low complexity) spans 84 to 95; that stretch reads GTTTAEAAPATG. Basic and acidic residues predominate over residues 97-116; that stretch reads KPDEPGKAGETPSEEKKGEG. Residues 119–130 are compositionally biased toward low complexity; it reads ATEQAAPQAPAS. Over residues 139–154 the composition is skewed to polar residues; it reads ETESATKASTDNSPSS. Serine 151, serine 153, and serine 154 each carry phosphoserine. Residues 155 to 167 show a composition bias toward basic and acidic residues; it reads KAEDAPAKEEPKQ. Residues 168 to 199 show a composition bias toward low complexity; sequence ADVPAAVTAAAATTPAAEDAAAKATAQPPTET. Position 181 is a phosphothreonine (threonine 181). Phosphoserine; by CK2 is present on residues serine 202 and serine 203. Positions 213 to 225 are enriched in basic and acidic residues; that stretch reads DETKPKESARQDE. The span at 226–238 shows a compositional bias: acidic residues; sequence GKEEEPEADQEHA.

This sequence belongs to the neuromodulin family. Identified in a complex containing FGFR4, NCAM1, CDH2, PLCG1, FRS2, SRC, SHC1, GAP43 and CTTN. Interacts (via IQ domain) with calmodulin. Binds calmodulin with a greater affinity in the absence of Ca(2+) than in its presence. In terms of processing, phosphorylated. Phosphorylation of this protein by a protein kinase C is specifically correlated with certain forms of synaptic plasticity. Palmitoylated by ZDHHC3. Palmitoylation is regulated by ARF6 and is essential for plasma membrane association and axonal and dendritic filopodia induction. Deacylated by LYPLA2.

It is found in the cell membrane. Its subcellular location is the cell projection. The protein resides in the growth cone membrane. The protein localises to the synapse. It localises to the filopodium membrane. It is found in the perikaryon. Its subcellular location is the dendrite. The protein resides in the axon. The protein localises to the cytoplasm. Its function is as follows. This protein is associated with nerve growth. It is a major component of the motile 'growth cones' that form the tips of elongating axons. Plays a role in axonal and dendritic filopodia induction. The protein is Neuromodulin (GAP43) of Homo sapiens (Human).